Consider the following 496-residue polypeptide: Cytochrome P450 71D180 (496 aa).

The helical; Signal-anchor for type II membrane protein transmembrane segment at 1–21 threads the bilayer; the sequence is MDISISWVVIIVFVLSYLILM. Cys435 contacts heme. The disordered stretch occupies residues 471 to 496; sequence MSETPGLSGPRKNPLIMIPTIHNPTS.

It belongs to the cytochrome P450 family. Heme serves as cofactor. In terms of tissue distribution, mostly expressed in flowers and stems, and, to a lower extent, in leaves.

It localises to the membrane. It catalyses the reaction gamma-terpinene + 2 reduced [NADPH--hemoprotein reductase] + 2 O2 = carvacrol + 2 oxidized [NADPH--hemoprotein reductase] + 3 H2O + 2 H(+). It carries out the reaction (4S)-limonene + reduced [NADPH--hemoprotein reductase] + O2 = (1S,5R)-carveol + oxidized [NADPH--hemoprotein reductase] + H2O + H(+). The enzyme catalyses (4R)-limonene + reduced [NADPH--hemoprotein reductase] + O2 = (1R,5S)-carveol + oxidized [NADPH--hemoprotein reductase] + H2O + H(+). It participates in secondary metabolite biosynthesis; terpenoid biosynthesis. Involved in the biosynthesis of phenolic monoterpenes natural products thymol and carvacrol which have a broad range of biological activities acting as antimicrobial compounds, insecticides, antioxidants and pharmaceutical agents. Catalyzes the C2-hydroxylation of gamma-terpinene to produce carvacrol. Also mediates the C6-hydroxylation of (4S)-limonene and (4R)-limonene to form carveol. The sequence is that of Cytochrome P450 71D180 from Origanum vulgare (Wild marjoram).